The following is a 481-amino-acid chain: Aromatic amino acid aminotransferase DDB_G0272014 (481 aa).

At Lys-300 the chain carries N6-(pyridoxal phosphate)lysine.

This sequence belongs to the class-I pyridoxal-phosphate-dependent aminotransferase family. Pyridoxal 5'-phosphate is required as a cofactor.

The protein localises to the cytoplasm. The catalysed reaction is an aromatic L-alpha-amino acid + 2-oxoglutarate = an aromatic oxo-acid + L-glutamate. In terms of biological role, has aromatic amino acid transaminase activity. The protein is Aromatic amino acid aminotransferase DDB_G0272014 of Dictyostelium discoideum (Social amoeba).